The primary structure comprises 425 residues: MDDRKLAFFTAIEDQGGVIVKGRTRFERLFHIGRSSVPLCVDALKAAVQEAKAGSDILRYQMAVNSLFQAAPNEPEALLDKAWMESKEKENRDTTAHLQAELQGYKNNLIKESIRMGNEDLGKHFEAIGDVEAAMDSFWKMRTEVSSTEQLVDLGKLLVRVAIERRDWKSIGNHLKPLNSVNDSDPKAKALKTYSKIANGIAALGQERYKEAAFCFVEASSGVPPEIYNQIASPNDVAIYGGLLALATMDRHELQANLLDNDSFREFLQREPHIRRAITQFVNGRYAACIEILESYRPDYLLDIYLQKHVPKLYADIRTKSIVQYLKPFSCVRLDTMQKAFNGPGPSIEDELFTMIKDGKLNARIDAINKSKALQTLENYEKQALDRIRRMNIMAADLEVKGSRKPGGMNDIPFSMTTDDTVSLA.

Residues 219–379 (ASSGVPPEIY…KSKALQTLEN (161 aa)) form the PCI domain.

The protein belongs to the CSN1 family. Component of the COP9 signalosome (CSN) complex.

It is found in the cytoplasm. The protein resides in the nucleus. Its function is as follows. Component of the COP9 signalosome (CSN) complex that acts as an regulator of the ubiquitin (Ubl) conjugation pathway by mediating the deneddylation of the cullin subunit of SCF-type E3 ubiquitin-protein ligase complexes. The CSN complex is involved in the regulation of the circadian clock through its control of the stability of the SCF(FWD-1) complex. This is COP9 signalosome complex subunit 1 (csn-1) from Neurospora crassa (strain ATCC 24698 / 74-OR23-1A / CBS 708.71 / DSM 1257 / FGSC 987).